The chain runs to 477 residues: Protein AC142 (477 aa).

It localises to the host cytoplasm. Its subcellular location is the host nucleus. The protein resides in the virion. Required for occlusion-derived virus (ODV) envelopment and subsequent embedding of virions into polyhedra. This Autographa californica nuclear polyhedrosis virus (AcMNPV) protein is Protein AC142 (ORF142).